The following is a 293-amino-acid chain: Energy-coupling factor transporter ATP-binding protein EcfA2 (293 aa).

The ABC transporter domain occupies Ile3 to Asp246. Gly40–Ser47 contacts ATP.

The protein belongs to the ABC transporter superfamily. Energy-coupling factor EcfA family. As to quaternary structure, forms a stable energy-coupling factor (ECF) transporter complex composed of 2 membrane-embedded substrate-binding proteins (S component), 2 ATP-binding proteins (A component) and 2 transmembrane proteins (T component).

It localises to the cell membrane. ATP-binding (A) component of a common energy-coupling factor (ECF) ABC-transporter complex. Unlike classic ABC transporters this ECF transporter provides the energy necessary to transport a number of different substrates. This is Energy-coupling factor transporter ATP-binding protein EcfA2 from Bacillus anthracis.